Reading from the N-terminus, the 1006-residue chain is Serine/threonine-protein phosphatase BSL3 (1006 aa).

Residues 1–67 (MDLDSSMVPE…QQQQQPQVTA (67 aa)) form a disordered region. Low complexity-rich tracts occupy residues 38–47 (SESESASLTP) and 54–67 (QQQQQQQQQPQVTA). 5 Kelch repeats span residues 138-184 (TSAG…VATA), 242-290 (YLMA…TASA), 295-345 (LLLL…VFVN), 351-398 (SGGA…DAAG), and 419-465 (LIFI…TPPG). 2 disordered regions span residues 454 to 494 (AAAA…LGSP) and 552 to 579 (GEVELPDRDRGAEATPSGKPSLSLIKPD). At Ser616 the chain carries Phosphoserine. Asp709, His711, Asp743, and Asn775 together coordinate Mn(2+). The Proton donor role is filled by His776. The Mn(2+) site is built by His828 and His907. Phosphoserine is present on Ser964. Positions 982–1006 (NVNRPPTPTRGRPQNPNDRGSLAWI) are disordered.

The protein belongs to the PPP phosphatase family. BSU subfamily. Requires Mn(2+) as cofactor. Expressed throughout the plant, with a higher level in younger parts.

It is found in the nucleus. The enzyme catalyses O-phospho-L-seryl-[protein] + H2O = L-seryl-[protein] + phosphate. The catalysed reaction is O-phospho-L-threonyl-[protein] + H2O = L-threonyl-[protein] + phosphate. In terms of biological role, phosphatase involved in elongation process, probably by acting as a regulator of brassinolide signaling. This chain is Serine/threonine-protein phosphatase BSL3 (BSL3), found in Arabidopsis thaliana (Mouse-ear cress).